The chain runs to 201 residues: LexA repressor (201 aa).

A DNA-binding region (H-T-H motif) is located at residues 27–47 (RMEISSAFGFASPNAAEDHLK). Active-site for autocatalytic cleavage activity residues include Ser-116 and Lys-153.

This sequence belongs to the peptidase S24 family. As to quaternary structure, homodimer.

It catalyses the reaction Hydrolysis of Ala-|-Gly bond in repressor LexA.. In terms of biological role, represses a number of genes involved in the response to DNA damage (SOS response), including recA and lexA. In the presence of single-stranded DNA, RecA interacts with LexA causing an autocatalytic cleavage which disrupts the DNA-binding part of LexA, leading to derepression of the SOS regulon and eventually DNA repair. In Dechloromonas aromatica (strain RCB), this protein is LexA repressor.